The sequence spans 345 residues: Ryncolin-1 (345 aa).

The signal sequence occupies residues 1–19 (MKPWAAFHLIFLVASSLEG). A disordered region spans residues 48–118 (ILQSQPGIPG…DKGDKGEDCN (71 aa)). The 58-residue stretch at 57-114 (GIPGVPGTNGSEGLKGDPGPQGPPGIRGPDGIRGEAGPKGDKGDQGDKGDKGDKGDKG) folds into the Collagen-like domain. The segment covering 86-116 (DGIRGEAGPKGDKGDQGDKGDKGDKGDKGED) has biased composition (basic and acidic residues). Positions 121 to 339 (GCLPTEVRNC…YADMKIRPQQ (219 aa)) constitute a Fibrinogen C-terminal domain. 2 disulfides stabilise this stretch: cysteine 130/cysteine 158 and cysteine 282/cysteine 295.

This sequence belongs to the ficolin lectin family. Veficolin subfamily. Hydroxylated, possibly at Pro-80. Expressed by the venom duct.

It is found in the secreted. Initiates complement activation and/or interferes in platelet aggregation and/or blood coagulation. The polypeptide is Ryncolin-1 (Cerberus rynchops (Dog-faced water snake)).